The sequence spans 224 residues: Charged multivesicular body protein 4b (224 aa).

Residues 1–23 form a disordered region; it reads MSVFGKLFGAGGGKAGKGGPTPQ. Residue S2 is modified to N-acetylserine. K6 carries the N6-acetyllysine modification. The segment covering 8-19 has biased composition (gly residues); the sequence is FGAGGGKAGKGG. Positions 23-183 form a coiled coil; sequence QEAIQRLRDT…EELDKNLLEI (161 aa). K114 is modified (N6-acetyllysine). 2 positions are modified to phosphoserine: S184 and S223. The tract at residues 185–224 is disordered; sequence GPETVPLPNVPSIALPSKPAKKKEEEDDDMKELENWAGSM.

The protein belongs to the SNF7 family. As to quaternary structure, probable core component of the endosomal sorting required for transport complex III (ESCRT-III). ESCRT-III components are thought to multimerize to form a flat lattice on the perimeter membrane of the endosome. Several assembly forms of ESCRT-III may exist that interact and act sequentially. Interacts with CHMP6 and CHMP4C. Interacts with PDCD6IP; the interaction is direct. Interacts with VPS4A; the interaction is direct. Interacts with VPS4B; the interaction is direct. Interacts with CHMP7. Interacts with CFTR; the interaction requires misfolded CFTR. Interacts with PTPN23. Interacts with CC2D1B. ISGylated. Isgylation weakens its interaction with VPS4A. In terms of tissue distribution, widely expressed. Expressed at higher level in heart and skeletal muscle. Also expressed in brain, colon, thymus, spleen, kidney, liver, small intestine, placenta, lung and peripheral blood lymphocytes.

The protein localises to the cytoplasm. The protein resides in the cytosol. Its subcellular location is the late endosome membrane. It localises to the midbody. It is found in the nucleus envelope. In terms of biological role, probable core component of the endosomal sorting required for transport complex III (ESCRT-III) which is involved in multivesicular bodies (MVBs) formation and sorting of endosomal cargo proteins into MVBs. MVBs contain intraluminal vesicles (ILVs) that are generated by invagination and scission from the limiting membrane of the endosome and mostly are delivered to lysosomes enabling degradation of membrane proteins, such as stimulated growth factor receptors, lysosomal enzymes and lipids. The MVB pathway appears to require the sequential function of ESCRT-O, -I,-II and -III complexes. ESCRT-III proteins mostly dissociate from the invaginating membrane before the ILV is released. The ESCRT machinery also functions in topologically equivalent membrane fission events, such as the terminal stages of cytokinesis. Together with SPAST, the ESCRT-III complex promotes nuclear envelope sealing and mitotic spindle disassembly during late anaphase. Plays a role in the endosomal sorting pathway. ESCRT-III proteins are believed to mediate the necessary vesicle extrusion and/or membrane fission activities, possibly in conjunction with the AAA ATPase VPS4. When overexpressed, membrane-assembled circular arrays of CHMP4B filaments can promote or stabilize negative curvature and outward budding. CHMP4A/B/C are required for the exosomal release of SDCBP, CD63 and syndecan. Majority of the protein exists in a folded closed conformation. Its function is as follows. (Microbial infection) The ESCRT machinery also functions in topologically equivalent membrane fission events, such as the budding of enveloped viruses (HIV-1 and other lentiviruses). Via its interaction with PDCD6IP involved in HIV-1 p6- and p9-dependent virus release. The polypeptide is Charged multivesicular body protein 4b (CHMP4B) (Homo sapiens (Human)).